Reading from the N-terminus, the 168-residue chain is Sec-independent protein translocase protein TatB (168 aa).

The helical transmembrane segment at Met-1 to Gly-21 threads the bilayer.

Belongs to the TatB family. In terms of assembly, the Tat system comprises two distinct complexes: a TatABC complex, containing multiple copies of TatA, TatB and TatC subunits, and a separate TatA complex, containing only TatA subunits. Substrates initially bind to the TatABC complex, which probably triggers association of the separate TatA complex to form the active translocon.

Its subcellular location is the cell inner membrane. In terms of biological role, part of the twin-arginine translocation (Tat) system that transports large folded proteins containing a characteristic twin-arginine motif in their signal peptide across membranes. Together with TatC, TatB is part of a receptor directly interacting with Tat signal peptides. TatB may form an oligomeric binding site that transiently accommodates folded Tat precursor proteins before their translocation. The chain is Sec-independent protein translocase protein TatB from Cupriavidus pinatubonensis (strain JMP 134 / LMG 1197) (Cupriavidus necator (strain JMP 134)).